The primary structure comprises 383 residues: S-adenosylmethionine synthase (383 aa).

ATP is bound at residue histidine 15. A Mg(2+)-binding site is contributed by aspartate 17. Glutamate 43 is a binding site for K(+). Residues glutamate 56 and glutamine 99 each contribute to the L-methionine site. The tract at residues 99–109 (QSPDINQGVDR) is flexible loop. ATP is bound by residues 164 to 166 (DAK), 230 to 231 (RF), aspartate 239, 245 to 246 (RK), alanine 262, and lysine 266. Aspartate 239 serves as a coordination point for L-methionine. Residue lysine 270 coordinates L-methionine.

Belongs to the AdoMet synthase family. In terms of assembly, homotetramer; dimer of dimers. The cofactor is Mg(2+). Requires K(+) as cofactor.

The protein localises to the cytoplasm. The catalysed reaction is L-methionine + ATP + H2O = S-adenosyl-L-methionine + phosphate + diphosphate. It functions in the pathway amino-acid biosynthesis; S-adenosyl-L-methionine biosynthesis; S-adenosyl-L-methionine from L-methionine: step 1/1. Its function is as follows. Catalyzes the formation of S-adenosylmethionine (AdoMet) from methionine and ATP. The overall synthetic reaction is composed of two sequential steps, AdoMet formation and the subsequent tripolyphosphate hydrolysis which occurs prior to release of AdoMet from the enzyme. This Shewanella oneidensis (strain ATCC 700550 / JCM 31522 / CIP 106686 / LMG 19005 / NCIMB 14063 / MR-1) protein is S-adenosylmethionine synthase.